The primary structure comprises 57 residues: Ribulose bisphosphate carboxylase large chain (57 aa).

Residues Met1 to Ser2 constitute a propeptide that is removed on maturation. Pro3 bears the N-acetylproline mark. Lys14 is modified (N6,N6,N6-trimethyllysine).

It belongs to the RuBisCO large chain family. Type I subfamily. As to quaternary structure, heterohexadecamer of 8 large chains and 8 small chains.

The protein localises to the plastid. The protein resides in the chloroplast. It carries out the reaction 2 (2R)-3-phosphoglycerate + 2 H(+) = D-ribulose 1,5-bisphosphate + CO2 + H2O. It catalyses the reaction D-ribulose 1,5-bisphosphate + O2 = 2-phosphoglycolate + (2R)-3-phosphoglycerate + 2 H(+). RuBisCO catalyzes two reactions: the carboxylation of D-ribulose 1,5-bisphosphate, the primary event in carbon dioxide fixation, as well as the oxidative fragmentation of the pentose substrate in the photorespiration process. Both reactions occur simultaneously and in competition at the same active site. This chain is Ribulose bisphosphate carboxylase large chain (rbcL), found in Camellia sinensis (Tea plant).